We begin with the raw amino-acid sequence, 124 residues long: UPF0102 protein Msil_0293 (124 aa).

It belongs to the UPF0102 family.

This is UPF0102 protein Msil_0293 from Methylocella silvestris (strain DSM 15510 / CIP 108128 / LMG 27833 / NCIMB 13906 / BL2).